Reading from the N-terminus, the 344-residue chain is Anthranilate phosphoribosyltransferase (344 aa).

Residues Gly-83, 86–87 (GD), Thr-91, 93–96 (NIST), 111–119 (KHGGRSVSS), and Ser-123 each bind 5-phospho-alpha-D-ribose 1-diphosphate. An anthranilate-binding site is contributed by Gly-83. Ser-95 contacts Mg(2+). Arg-169 is an anthranilate binding site. Positions 228 and 229 each coordinate Mg(2+).

Belongs to the anthranilate phosphoribosyltransferase family. Homodimer. Requires Mg(2+) as cofactor.

The catalysed reaction is N-(5-phospho-beta-D-ribosyl)anthranilate + diphosphate = 5-phospho-alpha-D-ribose 1-diphosphate + anthranilate. It functions in the pathway amino-acid biosynthesis; L-tryptophan biosynthesis; L-tryptophan from chorismate: step 2/5. In terms of biological role, catalyzes the transfer of the phosphoribosyl group of 5-phosphorylribose-1-pyrophosphate (PRPP) to anthranilate to yield N-(5'-phosphoribosyl)-anthranilate (PRA). This chain is Anthranilate phosphoribosyltransferase, found in Methylibium petroleiphilum (strain ATCC BAA-1232 / LMG 22953 / PM1).